A 299-amino-acid chain; its full sequence is Kruppel-like factor 2 (299 aa).

Disordered stretches follow at residues Tyr-19–His-38 and Tyr-146–Lys-189. Positions His-23 to His-38 are enriched in basic residues. Basic and acidic residues predominate over residues Ser-153–Lys-180. C2H2-type zinc fingers lie at residues His-198–His-222, Tyr-228–His-252, and Phe-258–His-280.

Belongs to the krueppel C2H2-type zinc-finger protein family. In terms of tissue distribution, expressed predominantly in intestine.

The protein resides in the nucleus. Functionally, probable transcription factor which regulates lipid metabolism. The chain is Kruppel-like factor 2 from Caenorhabditis elegans.